The following is a 948-amino-acid chain: Isoleucine--tRNA ligase (948 aa).

The short motif at 58-68 (PYANGSIHIGH) is the 'HIGH' region element. Glutamate 572 is a binding site for L-isoleucyl-5'-AMP. The 'KMSKS' region signature appears at 613-617 (KMSKS). Lysine 616 lines the ATP pocket. Residues cysteine 911, cysteine 914, cysteine 931, and cysteine 934 each contribute to the Zn(2+) site.

It belongs to the class-I aminoacyl-tRNA synthetase family. IleS type 1 subfamily. As to quaternary structure, monomer. It depends on Zn(2+) as a cofactor.

The protein localises to the cytoplasm. The enzyme catalyses tRNA(Ile) + L-isoleucine + ATP = L-isoleucyl-tRNA(Ile) + AMP + diphosphate. Functionally, catalyzes the attachment of isoleucine to tRNA(Ile). As IleRS can inadvertently accommodate and process structurally similar amino acids such as valine, to avoid such errors it has two additional distinct tRNA(Ile)-dependent editing activities. One activity is designated as 'pretransfer' editing and involves the hydrolysis of activated Val-AMP. The other activity is designated 'posttransfer' editing and involves deacylation of mischarged Val-tRNA(Ile). The protein is Isoleucine--tRNA ligase of Edwardsiella ictaluri (strain 93-146).